The sequence spans 526 residues: MMTVATTEELYQRLLKSIREGVDLQPKMVNVGTVIQVGDGVAKISGLEQAMASELLEFPPKAGRSEPVFGIALNLEKDAVSAIILGDYLGIEEGDQVNSTGRVISAPVGQALIGRVVNALGQPIDGKGPIQTTKYRPIERIAPGVITRKSVDTPVQTGIIAIDAMIPIGRGQRELIIGDRQTGKTAVAIDTIINQKGKGMVCIYVAIGQKRAQVAQIINFLEKYGAMDYTIVVSATASESAALQYIAPYAGCAMGEEVMENGVIIDGQEVRDALIVYDDLSKHATAYRQVSLLLRRPPGREAYPGDVFYLHSRLLERAARLNEDYGGGSLTALPIIETQANDVSAYIPTNVISITDGQIYLETDLFNAGIRPALNVGISVSRVGGAAQTRAMRSVSDRLKIDMAQFRDLAAFAQFASDLDATTRAQIERGQRLQEVLKQPQFQPMPLEEQVVILFAGINGYLDDVPINQIGRFKSELVNYMRTAHPEVGKMIFENRLDRKFPSPEIRSAIEHMLKEFKQMSTFAEG.

178–185 (GDRQTGKT) is a binding site for ATP.

This sequence belongs to the ATPase alpha/beta chains family. F-type ATPases have 2 components, CF(1) - the catalytic core - and CF(0) - the membrane proton channel. CF(1) has five subunits: alpha(3), beta(3), gamma(1), delta(1), epsilon(1). CF(0) has four main subunits: a(1), b(1), b'(1) and c(9-12).

The protein localises to the cell membrane. The catalysed reaction is ATP + H2O + 4 H(+)(in) = ADP + phosphate + 5 H(+)(out). Its function is as follows. Produces ATP from ADP in the presence of a proton gradient across the membrane. The alpha chain is a regulatory subunit. The sequence is that of ATP synthase subunit alpha from Roseiflexus castenholzii (strain DSM 13941 / HLO8).